Here is a 341-residue protein sequence, read N- to C-terminus: CRISPR-associated endonuclease Cas1 (341 aa).

Mn(2+)-binding residues include glutamate 173, histidine 242, and glutamate 257.

This sequence belongs to the CRISPR-associated endonuclease Cas1 family. In terms of assembly, homodimer, forms a heterotetramer with a Cas2 homodimer. The cofactor is Mg(2+). Mn(2+) is required as a cofactor.

Its function is as follows. CRISPR (clustered regularly interspaced short palindromic repeat), is an adaptive immune system that provides protection against mobile genetic elements (viruses, transposable elements and conjugative plasmids). CRISPR clusters contain spacers, sequences complementary to antecedent mobile elements, and target invading nucleic acids. CRISPR clusters are transcribed and processed into CRISPR RNA (crRNA). Acts as a dsDNA endonuclease. Involved in the integration of spacer DNA into the CRISPR cassette. The sequence is that of CRISPR-associated endonuclease Cas1 from Korarchaeum cryptofilum (strain OPF8).